Here is an 811-residue protein sequence, read N- to C-terminus: Capsid protein VP1 (811 aa).

The segment at 321–367 is disordered; it reads DSPMQEATKRKADSPAVETPAKKGTTGVNVNSQSTDPQNPSSSGATT. The span at 346–366 shows a compositional bias: polar residues; sequence TGVNVNSQSTDPQNPSSSGAT.

Its subcellular location is the virion. Its function is as follows. Capsid protein self-assembles to form an icosahedral capsid with a T=1 symmetry, about 22 nm in diameter, and consisting of 60 copies of size variants of the capsid proteins, which differ in the N-terminushe capsid encapsulates the genomic ssDNA. Capsid proteins are responsible for the attachment to host cell receptors. This attachment induces virion internalization predominantly through clathrin-dependent endocytosis. The polypeptide is Capsid protein VP1 (VP) (Galleria mellonella densovirus (GmDNV)).